We begin with the raw amino-acid sequence, 411 residues long: Serine hydroxymethyltransferase (411 aa).

(6S)-5,6,7,8-tetrahydrofolate is bound by residues Leu117 and 121 to 123 (GHL). Lys226 bears the N6-(pyridoxal phosphate)lysine mark. (6S)-5,6,7,8-tetrahydrofolate contacts are provided by residues Glu241 and 349 to 351 (SPF).

Belongs to the SHMT family. In terms of assembly, homodimer. Pyridoxal 5'-phosphate serves as cofactor.

The protein localises to the cytoplasm. It catalyses the reaction (6R)-5,10-methylene-5,6,7,8-tetrahydrofolate + glycine + H2O = (6S)-5,6,7,8-tetrahydrofolate + L-serine. The protein operates within one-carbon metabolism; tetrahydrofolate interconversion. Its pathway is amino-acid biosynthesis; glycine biosynthesis; glycine from L-serine: step 1/1. Functionally, catalyzes the reversible interconversion of serine and glycine with tetrahydrofolate (THF) serving as the one-carbon carrier. This reaction serves as the major source of one-carbon groups required for the biosynthesis of purines, thymidylate, methionine, and other important biomolecules. Also exhibits THF-independent aldolase activity toward beta-hydroxyamino acids, producing glycine and aldehydes, via a retro-aldol mechanism. The protein is Serine hydroxymethyltransferase of Oceanobacillus iheyensis (strain DSM 14371 / CIP 107618 / JCM 11309 / KCTC 3954 / HTE831).